The primary structure comprises 570 residues: MEFKYNGKVESIELNKYSKTLTQDPTQPATQAMHYGIGFKDEDFKKAQVGIVSMDWDGNPCNMHLGTLGSKIKNSVNQTDGLIGLQFHTIGVSDGIANGKLGMRYSLVSREVIADSIETNAGAEYYDAIVAVPGCDKNMPGSIIGMARLNRPSIMVYGGTIEHGEYKGEKLNIVSAFEALGQKITGNISEEDYHGVICNAIPGQGACGGMYTANTLASAIETLGMSLPYSASNPAVSQEKEDECDEIGLAIKNLLEKDIKPSDIMTKEAFENAITIVMVLGGSTNAVLHIIAMANAIGVEITQDDFQRISDVTPVLGDFKPSGKYMMEDLHKIGGVPAVLKYLLKEGKLHGDCLTVTGKTLAENVETALDLDFDSQDIIRPLENPIKATGHLQILYGNLAEGGSVAKISGKEGEFFKGTARVFDGEQHFIDGIESGRLHAGDVAVIRNIGPVGGPGMPEMLKPTSALIGAGLGKSCALITDGRFSGGTHGFVVGHIVPEAVEGGLIGLVEDDDIIEIDAVNNSISLKVADDEIARRRANYQKPAPKATRGVLAKFAKLTRPASEGCVTDL.

C61 contacts [2Fe-2S] cluster. Residue D94 participates in Mg(2+) binding. Residue C135 coordinates [2Fe-2S] cluster. The Mg(2+) site is built by D136 and K137. Position 137 is an N6-carboxylysine (K137). Residue C207 participates in [2Fe-2S] cluster binding. A Mg(2+)-binding site is contributed by E459. The Proton acceptor role is filled by S485.

Belongs to the IlvD/Edd family. As to quaternary structure, homodimer. Requires [2Fe-2S] cluster as cofactor. It depends on Mg(2+) as a cofactor.

It carries out the reaction (2R)-2,3-dihydroxy-3-methylbutanoate = 3-methyl-2-oxobutanoate + H2O. The catalysed reaction is (2R,3R)-2,3-dihydroxy-3-methylpentanoate = (S)-3-methyl-2-oxopentanoate + H2O. It functions in the pathway amino-acid biosynthesis; L-isoleucine biosynthesis; L-isoleucine from 2-oxobutanoate: step 3/4. It participates in amino-acid biosynthesis; L-valine biosynthesis; L-valine from pyruvate: step 3/4. Functions in the biosynthesis of branched-chain amino acids. Catalyzes the dehydration of (2R,3R)-2,3-dihydroxy-3-methylpentanoate (2,3-dihydroxy-3-methylvalerate) into 2-oxo-3-methylpentanoate (2-oxo-3-methylvalerate) and of (2R)-2,3-dihydroxy-3-methylbutanoate (2,3-dihydroxyisovalerate) into 2-oxo-3-methylbutanoate (2-oxoisovalerate), the penultimate precursor to L-isoleucine and L-valine, respectively. This Lactococcus lactis subsp. cremoris (strain SK11) protein is Dihydroxy-acid dehydratase.